Reading from the N-terminus, the 630-residue chain is Biosynthetic arginine decarboxylase (630 aa).

N6-(pyridoxal phosphate)lysine is present on lysine 99. Residue 281-291 (VDIGGGLGVDY) participates in substrate binding.

This sequence belongs to the Orn/Lys/Arg decarboxylase class-II family. SpeA subfamily. Requires Mg(2+) as cofactor. The cofactor is pyridoxal 5'-phosphate.

The enzyme catalyses L-arginine + H(+) = agmatine + CO2. Its pathway is amine and polyamine biosynthesis; agmatine biosynthesis; agmatine from L-arginine: step 1/1. In terms of biological role, catalyzes the biosynthesis of agmatine from arginine. This chain is Biosynthetic arginine decarboxylase, found in Bacteroides fragilis (strain ATCC 25285 / DSM 2151 / CCUG 4856 / JCM 11019 / LMG 10263 / NCTC 9343 / Onslow / VPI 2553 / EN-2).